The following is a 220-amino-acid chain: Membrane steroid-binding protein 1 (220 aa).

A helical membrane pass occupies residues Val-22–Phe-42. One can recognise a Cytochrome b5 heme-binding domain in the interval Glu-74 to Lys-171. Positions Glu-74–Lys-171 are steroid-binding. The segment at Gly-174–Glu-220 is disordered. Positions Glu-178–Gly-200 are enriched in polar residues. The span at Val-203–Glu-220 shows a compositional bias: basic and acidic residues.

Belongs to the cytochrome b5 family. MAPR subfamily. As to quaternary structure, interacts with BAK1 (via extracellular region). In terms of tissue distribution, expressed in cotyledons, stems, roots, leaves, flower and silique stalks, pistils and stigmas, but not in anthers.

The protein resides in the cell membrane. The protein localises to the endosome membrane. Its function is as follows. MSBP1 can bind to multiple steroid compounds with different affinities. Negatively regulates cell elongation and brassinosteroid signaling. May act as a coreceptor with BAK1 and enhances its endocytosis. The sequence is that of Membrane steroid-binding protein 1 (MSBP1) from Arabidopsis thaliana (Mouse-ear cress).